A 194-amino-acid polypeptide reads, in one-letter code: tRNA(Phe) 7-((3-amino-3-carboxypropyl)-4-demethylwyosine(37)-N(4))-methyltransferase 1 (194 aa).

The protein belongs to the TYW3 family.

The catalysed reaction is 4-demethyl-7-[(3S)-3-amino-3-carboxypropyl]wyosine(37) in tRNA(Phe) + S-adenosyl-L-methionine = 7-[(3S)-3-amino-3-carboxypropyl]wyosine(37) in tRNA(Phe) + S-adenosyl-L-homocysteine + H(+). Its function is as follows. S-adenosyl-L-methionine-dependent methyltransferase that acts as a component of the wyosine derivatives biosynthesis pathway. Probably methylates N-4 position of wybutosine-86 to produce wybutosine-72. This Pyrococcus abyssi (strain GE5 / Orsay) protein is tRNA(Phe) 7-((3-amino-3-carboxypropyl)-4-demethylwyosine(37)-N(4))-methyltransferase 1.